The sequence spans 85 residues: Small ribosomal subunit protein uS17 (85 aa).

The protein belongs to the universal ribosomal protein uS17 family. Part of the 30S ribosomal subunit.

In terms of biological role, one of the primary rRNA binding proteins, it binds specifically to the 5'-end of 16S ribosomal RNA. The protein is Small ribosomal subunit protein uS17 of Lachnoclostridium phytofermentans (strain ATCC 700394 / DSM 18823 / ISDg) (Clostridium phytofermentans).